The primary structure comprises 158 residues: Regulator of sigma D (158 aa).

Belongs to the Rsd/AlgQ family. As to quaternary structure, interacts with RpoD.

The protein resides in the cytoplasm. In terms of biological role, binds RpoD and negatively regulates RpoD-mediated transcription activation by preventing the interaction between the primary sigma factor RpoD with the catalytic core of the RNA polymerase and with promoter DNA. May be involved in replacement of the RNA polymerase sigma subunit from RpoD to RpoS during the transition from exponential growth to the stationary phase. This is Regulator of sigma D from Escherichia coli O6:H1 (strain CFT073 / ATCC 700928 / UPEC).